The chain runs to 249 residues: Phosphate import ATP-binding protein PstB (249 aa).

The ABC transporter domain maps to 4–244; that stretch reads IQTKDLNLYY…PKDKRTEDYI (241 aa). Residue 36–43 coordinates ATP; it reads GPSGCGKS.

It belongs to the ABC transporter superfamily. Phosphate importer (TC 3.A.1.7) family. As to quaternary structure, the complex is composed of two ATP-binding proteins (PstB), two transmembrane proteins (PstC and PstA) and a solute-binding protein (PstS).

Its subcellular location is the cell membrane. The enzyme catalyses phosphate(out) + ATP + H2O = ADP + 2 phosphate(in) + H(+). Its function is as follows. Part of the ABC transporter complex PstSACB involved in phosphate import. Responsible for energy coupling to the transport system. The chain is Phosphate import ATP-binding protein PstB from Clostridium acetobutylicum (strain ATCC 824 / DSM 792 / JCM 1419 / IAM 19013 / LMG 5710 / NBRC 13948 / NRRL B-527 / VKM B-1787 / 2291 / W).